The sequence spans 179 residues: Cytochrome c-type biogenesis protein CcmE (179 aa).

The Cytoplasmic segment spans residues 1 to 8 (MNPRRKSR). Residues 9 to 29 (LTIILFVLLGVTIASSLVLYA) traverse the membrane as a helical; Signal-anchor for type II membrane protein segment. At 30 to 179 (LRQNIDLFYT…AVNSVEEGKK (150 aa)) the chain is on the periplasmic side. Heme contacts are provided by His131 and Tyr135. 2 stretches are compositionally biased toward basic and acidic residues: residues 138 to 148 (PDLSEKMEQVH) and 161 to 179 (ESDR…EGKK). The tract at residues 138-179 (PDLSEKMEQVHKPMGISNQDMQGESDRDRLDKAVNSVEEGKK) is disordered.

It belongs to the CcmE/CycJ family.

It is found in the cell inner membrane. Functionally, heme chaperone required for the biogenesis of c-type cytochromes. Transiently binds heme delivered by CcmC and transfers the heme to apo-cytochromes in a process facilitated by CcmF and CcmH. This is Cytochrome c-type biogenesis protein CcmE from Mannheimia succiniciproducens (strain KCTC 0769BP / MBEL55E).